We begin with the raw amino-acid sequence, 159 residues long: Small ribosomal subunit protein uS9 (159 aa).

Belongs to the universal ribosomal protein uS9 family.

The polypeptide is Small ribosomal subunit protein uS9 (Rickettsia africae (strain ESF-5)).